Here is a 248-residue protein sequence, read N- to C-terminus: Zinc finger CCCH domain-containing protein 36 (248 aa).

Disordered regions lie at residues 1-37 (MDTR…GLGS) and 87-110 (MQGS…VSNF). The segment at 36–64 (GSKSKPCTKFFSTSGCPFGENCHFLHYVP) adopts a C3H1-type 1 zinc-finger fold. A compositionally biased stretch (gly residues) spans 90-103 (SGNGGRFSGRGESG). The region spanning 113–177 (SATARFSVDA…EQISEASAMV (65 aa)) is the KH domain. Residues 188–209 (AKKPPGGGLGGGGGMGSEGKPH) are disordered. The segment covering 192–204 (PGGGLGGGGGMGS) has biased composition (gly residues). The C3H1-type 2 zinc-finger motif lies at 213–240 (NFKTKICERFSKGNCTFGDRCHFAHGEA).

The protein is Zinc finger CCCH domain-containing protein 36 of Arabidopsis thaliana (Mouse-ear cress).